The sequence spans 255 residues: MTNNQQQPITIKISEFEGPLDLLLHLIRQNKMDIYDIPIAAITQQYLDYLHSMRALKLDIAGDYLVMAATLMTIKSRFLLPQPEPDEMDEDNEDDDPRDSLVAELLAYKVYQEAAGELREKEQARHQHFTREAMLVPADLSAPKLTAGITLDDLQAAFRQLVAKRRRVRPLTKTVVAETINIDERMTQITTQLQHQPQGLDFADLFTVSASDEMLVTTFMAVLELTKQDQVALQQAEPLSPIHLYLRQDEQHDEH.

The protein belongs to the ScpA family. Component of a cohesin-like complex composed of ScpA, ScpB and the Smc homodimer, in which ScpA and ScpB bind to the head domain of Smc. The presence of the three proteins is required for the association of the complex with DNA.

The protein localises to the cytoplasm. In terms of biological role, participates in chromosomal partition during cell division. May act via the formation of a condensin-like complex containing Smc and ScpB that pull DNA away from mid-cell into both cell halves. In Lactiplantibacillus plantarum (strain ATCC BAA-793 / NCIMB 8826 / WCFS1) (Lactobacillus plantarum), this protein is Segregation and condensation protein A.